A 630-amino-acid polypeptide reads, in one-letter code: A disintegrin and metalloproteinase with thrombospondin motifs 4 (630 aa).

The propeptide occupies 1–5 (RRTKR). The Peptidase M12B domain occupies 11–221 (RFVETLVVAD…GYGHCLLDKP (211 aa)). 11 disulfides stabilise this stretch: Cys86–Cys138, Cys115–Cys120, Cys132–Cys216, Cys170–Cys200, Cys242–Cys265, Cys253–Cys275, Cys260–Cys294, Cys288–Cys299, Cys325–Cys362, Cys329–Cys367, and Cys340–Cys352. N-linked (GlcNAc...) asparagine glycosylation occurs at Asn96. Residue His154 coordinates Zn(2+). Residue Glu155 is part of the active site. Residues His158 and His164 each coordinate Zn(2+). One can recognise a Disintegrin domain in the interval 233 to 303 (GKDYDADRQC…CMGGRCLHVD (71 aa)). In terms of domain architecture, TSP type-1 spans 313-368 (AGGWGPWGPWGDCSRTCGGGVQFSSRDCTKPVPRNGGKYCEGRRTPFRSCNTKNCP). N-linked (GlcNAc...) asparagine glycosylation is present at Asn474. Residues 479–630 (SKQSGSFKKF…LRKRTWAGRK (152 aa)) are spacer.

As to quaternary structure, interacts with SRPX2. Requires Zn(2+) as cofactor. Post-translationally, the precursor is cleaved by a furin endopeptidase. In terms of processing, glycosylated. Can be O-fucosylated by POFUT2 on a serine or a threonine residue found within the consensus sequence C1-X(2)-(S/T)-C2-G of the TSP type-1 repeat domains where C1 and C2 are the first and second cysteine residue of the repeat, respectively. Fucosylated repeats can then be further glycosylated by the addition of a beta-1,3-glucose residue by the glucosyltransferase, B3GALTL. Fucosylation mediates the efficient secretion of ADAMTS family members. Can also be C-glycosylated with one or two mannose molecules on tryptophan residues within the consensus sequence W-X-X-W of the TPRs, and N-glycosylated. These other glycosylations can also facilitate secretion. Brain specific.

It localises to the secreted. Its subcellular location is the extracellular space. It is found in the extracellular matrix. The enzyme catalyses Glutamyl endopeptidase. Bonds cleaved include 370-Thr-Glu-Gly-Glu-|-Ala-Arg-Gly-Ser-377 in the interglobular domain of mammalian aggrecan.. Its function is as follows. Cleaves aggrecan, a cartilage proteoglycan, at the '392-Glu-|-Ala-393' site and may be involved in its turnover. Also cleaves COMP. May play an important role in the destruction of aggrecan in arthritic diseases. The sequence is that of A disintegrin and metalloproteinase with thrombospondin motifs 4 (Adamts4) from Rattus norvegicus (Rat).